The primary structure comprises 942 residues: Isoleucine--tRNA ligase (942 aa).

Positions 58–68 (PYVNGSIHLGH) match the 'HIGH' region motif. Glu-564 serves as a coordination point for L-isoleucyl-5'-AMP. A 'KMSKS' region motif is present at residues 605-609 (KMSKS). Lys-608 contributes to the ATP binding site. The Zn(2+) site is built by Cys-905, Cys-908, Cys-925, and Cys-928.

Belongs to the class-I aminoacyl-tRNA synthetase family. IleS type 1 subfamily. As to quaternary structure, monomer. Zn(2+) serves as cofactor.

It is found in the cytoplasm. The enzyme catalyses tRNA(Ile) + L-isoleucine + ATP = L-isoleucyl-tRNA(Ile) + AMP + diphosphate. Its function is as follows. Catalyzes the attachment of isoleucine to tRNA(Ile). As IleRS can inadvertently accommodate and process structurally similar amino acids such as valine, to avoid such errors it has two additional distinct tRNA(Ile)-dependent editing activities. One activity is designated as 'pretransfer' editing and involves the hydrolysis of activated Val-AMP. The other activity is designated 'posttransfer' editing and involves deacylation of mischarged Val-tRNA(Ile). This Blochmanniella pennsylvanica (strain BPEN) protein is Isoleucine--tRNA ligase.